Consider the following 392-residue polypeptide: Autophagy-related protein 21 (392 aa).

WD repeat units lie at residues 200 to 240 (VHQS…NDEP) and 250 to 289 (SRPS…TEAD). The L/FRRG motif signature appears at 246 to 250 (FRRGS).

It belongs to the WD repeat PROPPIN family.

The protein localises to the cytoplasm. It is found in the membrane. It localises to the vacuole membrane. In terms of biological role, required for cytoplasm to vacuole transport (Cvt) vesicles formation and mitophagy. Involved in binding of phosphatidylethanolamine to ATG8 and in recruitment of ATG8 and ATG5 to the pre-autophagosomal structure. Protects ATG8 from ARG4-mediated cleavage. This is Autophagy-related protein 21 (ATG21) from Kluyveromyces lactis (strain ATCC 8585 / CBS 2359 / DSM 70799 / NBRC 1267 / NRRL Y-1140 / WM37) (Yeast).